The chain runs to 157 residues: Putative pre-16S rRNA nuclease (157 aa).

The protein belongs to the YqgF nuclease family.

It localises to the cytoplasm. In terms of biological role, could be a nuclease involved in processing of the 5'-end of pre-16S rRNA. The chain is Putative pre-16S rRNA nuclease from Anaplasma marginale (strain St. Maries).